We begin with the raw amino-acid sequence, 908 residues long: Auxin response factor 6 (908 aa).

The disordered stretch occupies residues 1–21 (MKLSPSAGGVSDQPPSPPEVA). Residues 134–236 (FCKTLTASDT…QLLLGIRRAN (103 aa)) constitute a DNA-binding region (TF-B3). The disordered stretch occupies residues 525–556 (NEQKPQLQPQQQQQESHQQQPQHQQMQQQKHL). Residues 526-556 (EQKPQLQPQQQQQESHQQQPQHQQMQQQKHL) are compositionally biased toward low complexity. In terms of domain architecture, PB1 spans 777–861 (ATFVKVYKSG…SCIKILSPQE (85 aa)).

The protein belongs to the ARF family. As to quaternary structure, homodimers and heterodimers.

The protein localises to the nucleus. Its function is as follows. Auxin response factors (ARFs) are transcriptional factors that bind specifically to the DNA sequence 5'-TGTCTC-3' found in the auxin-responsive promoter elements (AuxREs). The sequence is that of Auxin response factor 6 (ARF6) from Oryza sativa subsp. indica (Rice).